The sequence spans 317 residues: Transaldolase (317 aa).

Lysine 132 serves as the catalytic Schiff-base intermediate with substrate.

It belongs to the transaldolase family. Type 1 subfamily. As to quaternary structure, homodimer.

Its subcellular location is the cytoplasm. It carries out the reaction D-sedoheptulose 7-phosphate + D-glyceraldehyde 3-phosphate = D-erythrose 4-phosphate + beta-D-fructose 6-phosphate. It functions in the pathway carbohydrate degradation; pentose phosphate pathway; D-glyceraldehyde 3-phosphate and beta-D-fructose 6-phosphate from D-ribose 5-phosphate and D-xylulose 5-phosphate (non-oxidative stage): step 2/3. In terms of biological role, transaldolase is important for the balance of metabolites in the pentose-phosphate pathway. The polypeptide is Transaldolase (Haemophilus influenzae (strain 86-028NP)).